The chain runs to 197 residues: Lactoylglutathione lyase-like protein terB (197 aa).

Residues 1–19 (MARFAVLQLLLPLAAGLTG) form the signal peptide. N-linked (GlcNAc...) asparagine glycans are attached at residues Asn82, Asn99, and Asn140.

It belongs to the glyoxalase I family.

In terms of biological role, lactoylglutathione lyase-like protein; part of the gene cluster that mediates the biosynthesis of terrein, a fungal metabolite with ecological, antimicrobial, antiproliferative, and antioxidative activities. The first step in the pathway is performed by the polyketide synthase terA that produces 4-hydroxy-6-methylpyranon (4-HMP), orsellinic acid (OA), and 2,3-dehydro-6-hydroxymellein (2,3-dehydro-6-HM) by condensing acetyl-CoA with two, three, or four malonyl-CoA units, respectively. 4-HMP and OA are not pathway intermediates, but are rather shunt or side products. 2,3-dehydro-6-HM is further converted to 6-hydroxymellein (6-HM) by the 6-hydroxymellein synthase terB. The monooxygenases terC and terD, the multicopper oxidase terE and the Kelch-like protein terF are then involved in the transformation of 6-HM to terrein. Even if they are co-regulated with the other terrein cluster genes, terH and terI seem to be dispensable for terrein production; whereas one or both of the 2 transporters terG and terJ are probably required for efficient secretion of metabolites. This is Lactoylglutathione lyase-like protein terB from Aspergillus terreus (strain NIH 2624 / FGSC A1156).